Consider the following 738-residue polypeptide: Elongation factor G, mitochondrial (738 aa).

Residues 1-20 (MCIGPAPTPETEEELPPSPQ) form a disordered region. One can recognise a tr-type G domain in the interval 32 to 320 (RFQRNIGVSA…GVCAYLPNPA (289 aa)). GTP contacts are provided by residues 41–48 (AHIDSGKT), 118–122 (DTPGH), and 172–175 (NKMD).

It belongs to the TRAFAC class translation factor GTPase superfamily. Classic translation factor GTPase family. EF-G/EF-2 subfamily.

The protein resides in the mitochondrion. It participates in protein biosynthesis; polypeptide chain elongation. Mitochondrial GTPase that catalyzes the GTP-dependent ribosomal translocation step during translation elongation. During this step, the ribosome changes from the pre-translocational (PRE) to the post-translocational (POST) state as the newly formed A-site-bound peptidyl-tRNA and P-site-bound deacylated tRNA move to the P and E sites, respectively. Catalyzes the coordinated movement of the two tRNA molecules, the mRNA and conformational changes in the ribosome. This is Elongation factor G, mitochondrial from Laccaria bicolor (strain S238N-H82 / ATCC MYA-4686) (Bicoloured deceiver).